Consider the following 191-residue polypeptide: MICNARQKEKGGKPTGLEYLEVGSRVRDDESKRNKVKVDEDHGLYEFFRHKDKALSTPAEEGNHGRPWSAEELRGKSWEDLHSLWWICCKERNRIATESYERDRLEAGYGEEDSEKRDMTVRRTQRAIKQVLTERYYSWQEAQVVAKDDPEIDLSGQGPIYTPRDFEEDIEEEVLAESEGEVEQKPAQITA.

Belongs to the universal ribosomal protein uL29 family. As to quaternary structure, component of the mitochondrial large ribosomal subunit. Mature mitochondrial ribosomes consist of a small (37S) and a large (54S) subunit. The 37S subunit contains at least 33 different proteins and 1 molecule of RNA (15S). The 54S subunit contains at least 45 different proteins and 1 molecule of RNA (21S).

It localises to the mitochondrion. In Sclerotinia sclerotiorum (strain ATCC 18683 / 1980 / Ss-1) (White mold), this protein is Large ribosomal subunit protein uL29m (MRPL4).